The sequence spans 390 residues: 5-hydroxytryptamine receptor 1B (390 aa).

The Extracellular portion of the chain corresponds to Met-1 to Leu-46. Residues Asn-24 and Asn-32 are each glycosylated (N-linked (GlcNAc...) asparagine). The chain crosses the membrane as a helical span at residues Pro-47–Ala-72. At Thr-73–Tyr-86 the chain is on the cytoplasmic side. A helical membrane pass occupies residues Leu-87–Val-111. Residues Thr-112 to Gln-119 are Extracellular-facing. The chain crosses the membrane as a helical span at residues Val-120–Leu-145. Residues Cys-122 and Cys-199 are joined by a disulfide bond. Residues Asp-129 and Thr-134 each coordinate ergotamine. A DRY motif; important for ligand-induced conformation changes and signaling motif is present at residues Asp-146–Tyr-148. Topologically, residues Asp-146–Arg-165 are cytoplasmic. A helical membrane pass occupies residues Ala-166 to Pro-184. Topologically, residues Phe-185 to His-205 are extracellular. Val-201 is a binding site for ergotamine. A helical membrane pass occupies residues Ile-206–Gly-229. Topologically, residues Arg-230–Thr-315 are cytoplasmic. Residues Asp-259 to Ser-272 are compositionally biased toward polar residues. A disordered region spans residues Asp-259 to Ser-281. Residues Leu-316 to Met-337 traverse the membrane as a helical segment. Residues Pro-338–His-347 lie on the Extracellular side of the membrane. Residues Leu-348–Thr-370 form a helical membrane-spanning segment. Positions Asn-365–Tyr-369 match the NPxxY motif; important for ligand-induced conformation changes and signaling motif. Residues Met-371–Ser-390 are Cytoplasmic-facing. Residue Cys-388 is the site of S-palmitoyl cysteine attachment.

Belongs to the G-protein coupled receptor 1 family. In terms of assembly, homodimer. Heterodimer with HTR1D. Post-translationally, phosphorylated. Desensitization of the receptor may be mediated by its phosphorylation. Palmitoylated.

Its subcellular location is the cell membrane. G-protein coupled receptor for 5-hydroxytryptamine (serotonin). Also functions as a receptor for ergot alkaloid derivatives, various anxiolytic and antidepressant drugs and other psychoactive substances, such as lysergic acid diethylamide (LSD). Ligand binding causes a conformation change that triggers signaling via guanine nucleotide-binding proteins (G proteins) and modulates the activity of downstream effectors, such as adenylate cyclase. HTR1B is coupled to G(i)/G(o) G alpha proteins and mediates inhibitory neurotransmission by inhibiting adenylate cyclase activity. Arrestin family members inhibit signaling via G proteins and mediate activation of alternative signaling pathways. Regulates the release of 5-hydroxytryptamine, dopamine and acetylcholine in the brain, and thereby affects neural activity, nociceptive processing, pain perception, mood and behavior. Besides, plays a role in vasoconstriction of cerebral arteries. This Gorilla gorilla gorilla (Western lowland gorilla) protein is 5-hydroxytryptamine receptor 1B (HTR1B).